Here is a 76-residue protein sequence, read N- to C-terminus: Small ribosomal subunit protein bS16c (76 aa).

Belongs to the bacterial ribosomal protein bS16 family.

The protein localises to the plastid. It is found in the chloroplast. The chain is Small ribosomal subunit protein bS16c from Guillardia theta (Cryptophyte).